The following is a 562-amino-acid chain: Probable E3 ubiquitin-protein ligase ARI7 (562 aa).

The tract at residues 1-39 (MDSEEDMLDAHDMESGEDDFYSGGTDDCNDSDDGEPDYG) is disordered. The segment covering 27 to 39 (DCNDSDDGEPDYG) has biased composition (acidic residues). Residues 133-346 (SELTCGICFD…GGFYACNRYE (214 aa)) form a TRIAD supradomain region. Residues C137, C140, C154, H156, C159, C162, C182, C187, C226, C231, C248, C250, C255, C258, H263, C268, C295, and C298 each coordinate Zn(2+). An RING-type 1 zinc finger spans residues 137-187 (CGICFDSYPPEKIASVSCGHPFCTTCWTGYISTTINDGPGCLMLRCPDPSC). Residues 206–268 (EKYNRYFLRS…TEEAHRPVDC (63 aa)) form an IBR-type zinc finger. Residues 295 to 325 (CPRCKRPIEKNQGCMHMTCTPPCKYEFCWLC) form an RING-type 2; atypical zinc finger. C308 is a catalytic residue. Residues C313, C317, C322, C325, H332, and C342 each coordinate Zn(2+). Residues 524 to 562 (ACSSKSTSSKSTGCSSKTRGKGKGSSRTGGSSRNPDDNL) are disordered. Residues 525 to 540 (CSSKSTSSKSTGCSSK) show a composition bias toward low complexity.

Belongs to the RBR family. Ariadne subfamily. Requires Zn(2+) as cofactor. In terms of tissue distribution, ubiquitous.

It catalyses the reaction [E2 ubiquitin-conjugating enzyme]-S-ubiquitinyl-L-cysteine + [acceptor protein]-L-lysine = [E2 ubiquitin-conjugating enzyme]-L-cysteine + [acceptor protein]-N(6)-ubiquitinyl-L-lysine.. It participates in protein modification; protein ubiquitination. Might act as an E3 ubiquitin-protein ligase, or as part of E3 complex, which accepts ubiquitin from specific E2 ubiquitin-conjugating enzymes and then transfers it to substrates. This chain is Probable E3 ubiquitin-protein ligase ARI7 (ARI7), found in Arabidopsis thaliana (Mouse-ear cress).